The chain runs to 475 residues: UDP-N-acetylmuramate--L-alanine ligase (475 aa).

112–118 (GTHGKTT) is a binding site for ATP.

This sequence belongs to the MurCDEF family.

The protein resides in the cytoplasm. The enzyme catalyses UDP-N-acetyl-alpha-D-muramate + L-alanine + ATP = UDP-N-acetyl-alpha-D-muramoyl-L-alanine + ADP + phosphate + H(+). Its pathway is cell wall biogenesis; peptidoglycan biosynthesis. Functionally, cell wall formation. This Cupriavidus pinatubonensis (strain JMP 134 / LMG 1197) (Cupriavidus necator (strain JMP 134)) protein is UDP-N-acetylmuramate--L-alanine ligase.